Here is a 393-residue protein sequence, read N- to C-terminus: Elongation factor Tu (393 aa).

Positions 10-203 (KPHVNIGTIG…AVDNYIPTPV (194 aa)) constitute a tr-type G domain. Residues 19–26 (GHVDHGKT) form a G1 region. GTP is bound at residue 19–26 (GHVDHGKT). Threonine 26 is a Mg(2+) binding site. Residues 60–64 (GITIS) form a G2 region. The interval 81-84 (DCPG) is G3. Residues 81 to 85 (DCPGH) and 136 to 139 (NKVD) contribute to the GTP site. The G4 stretch occupies residues 136 to 139 (NKVD). Positions 173-175 (SAL) are G5.

It belongs to the TRAFAC class translation factor GTPase superfamily. Classic translation factor GTPase family. EF-Tu/EF-1A subfamily. Monomer.

The protein localises to the cytoplasm. The enzyme catalyses GTP + H2O = GDP + phosphate + H(+). GTP hydrolase that promotes the GTP-dependent binding of aminoacyl-tRNA to the A-site of ribosomes during protein biosynthesis. The chain is Elongation factor Tu from Chloroherpeton thalassium (strain ATCC 35110 / GB-78).